The following is a 136-amino-acid chain: Histone H3.1/H3.2 (136 aa).

Positions 1–43 are disordered; it reads MARTKQTARKSTGGKAPRKQLASKAARKSAPSTGGVKKPHRYK. An N6,N6,N6-trimethyllysine; alternate modification is found at Lys5. Lys5 is modified (N6,N6-dimethyllysine; alternate). N6-methyllysine; alternate occurs at positions 5 and 10. Position 10 is an N6-acetyllysine; alternate (Lys10). Residue Ser11 is modified to Phosphoserine. Lys15 is modified (N6,N6-dimethyllysine; alternate). N6-acetyllysine; alternate is present on residues Lys15, Lys19, Lys24, Lys28, and Lys37. An N6-methyllysine; alternate mark is found at Lys19, Lys24, Lys28, and Lys37. Residues Lys28 and Lys37 each carry the N6,N6,N6-trimethyllysine; alternate modification. N6,N6-dimethyllysine; alternate is present on residues Lys28 and Lys37. Lys57 and Lys65 each carry N6-acetyllysine. An N6,N6,N6-trimethyllysine; alternate modification is found at Lys80. The residue at position 80 (Lys80) is an N6,N6-dimethyllysine; alternate. Lys80 is subject to N6-methyllysine; alternate.

It belongs to the histone H3 family. In terms of assembly, the nucleosome is a histone octamer containing two molecules each of H2A, H2B, H3 and H4 assembled in one H3-H4 heterotetramer and two H2A-H2B heterodimers. The octamer wraps approximately 147 bp of DNA. Phosphorylated to form H3S10ph. H3S10ph promotes subsequent H3K14ac formation and is required for transcriptional activation through TBP recruitment to the promoters. Post-translationally, mono-, di- and trimethylated by the COMPASS complex to form H3K4me1/2/3. H3K4me activates gene expression by regulating transcription elongation and plays a role in telomere length maintenance. H3K4me enrichment correlates with transcription levels, and occurs in a 5' to 3' gradient with H3K4me3 enrichment at the 5'-end of genes, shifting to H3K4me2 and then H3K4me1. Methylated by SET2 to form H3K36me. H3K36me represses gene expression. Methylated by DOT1 to form H3K79me. H3K79me is required for association of SIR proteins with telomeric regions and for telomeric silencing. The COMPASS-mediated formation of H3K4me2/3 and the DOT1-mediated formation of H3K79me require H2BK123ub1. In terms of processing, acetylation of histone H3 leads to transcriptional activation. H3K14ac formation by GCN5 is promoted by H3S10ph. H3K14ac can also be formed by ESA1. H3K56ac formation occurs predominantly in newly synthesized H3 molecules during G1, S and G2/M of the cell cycle and may be involved in DNA repair.

The protein resides in the nucleus. It is found in the chromosome. In terms of biological role, core component of nucleosome. Nucleosomes wrap and compact DNA into chromatin, limiting DNA accessibility to the cellular machineries which require DNA as a template. Histones thereby play a central role in transcription regulation, DNA repair, DNA replication and chromosomal stability. DNA accessibility is regulated via a complex set of post-translational modifications of histones, also called histone code, and nucleosome remodeling. This chain is Histone H3.1/H3.2 (HHT1), found in Lodderomyces elongisporus (strain ATCC 11503 / CBS 2605 / JCM 1781 / NBRC 1676 / NRRL YB-4239) (Yeast).